Reading from the N-terminus, the 969-residue chain is Aspartic protease 5 (969 aa).

The first 22 residues, 1–22 (MEAGAMGGSSFLSFSSGPSAET), serve as a signal peptide directing secretion. The segment covering 1–45 (MEAGAMGGSSFLSFSSGPSAETSPSSLSPPTSSSPSPSPQLVSDS) has biased composition (low complexity). Disordered regions lie at residues 1 to 65 (MEAG…SSRT), 79 to 104 (ENEA…AGHL), 128 to 149 (SSAT…RSSS), 173 to 193 (SSSS…SACG), and 311 to 382 (FLSL…DLPR). Residues 23–820 (SPSSLSPPTS…PEGLPLSPQQ (798 aa)) are Lumenal-facing. Over residues 311–324 (FLSLSSSPRSLASD) the composition is skewed to low complexity. Basic and acidic residues predominate over residues 335–355 (QSREQRGEREGERQRPDKGEE). The 346-residue stretch at 413–758 (YFLDILVGTP…DREQDRVGFA (346 aa)) folds into the Peptidase A1 domain. Residue aspartate 431 is part of the active site. The tract at residues 608 to 635 (PPESESTPATEALRPVAGESASRRISEK) is disordered. Aspartate 682 is an active-site residue. The disordered stretch occupies residues 768–794 (DQRPRGPDSGDGPKGRPTAPFTVPPLR). Residues 769–781 (QRPRGPDSGDGPK) show a composition bias toward basic and acidic residues. Residues 821-841 (LWVAAALVVVAILIAVTVILL) traverse the membrane as a helical segment. Residues 842-969 (HTIKRPSRSS…TLLDLPLGGE (128 aa)) are Cytoplasmic-facing. Positions 922–969 (EDDGDFFGDDSVPSAEEQETAPSLSLREESSPFSASQSTLLDLPLGGE) are disordered. The span at 952-961 (SPFSASQSTL) shows a compositional bias: polar residues.

Belongs to the peptidase A1 family. Post-translationally, may be auto-cleaved to produce a 55 kDa form.

It is found in the golgi apparatus membrane. Its function is as follows. In tachyzoites, plays an essential role in the export of several dense granule proteins into the host cell by cleaving the localization motif RRLxx (termed Toxoplasma export element (TEXEL)) located downstream of the N-terminal secretory signal sequence. However, can also regulate the export of proteins that lack the TEXEL motif, such as GRA24. Requires Arg at P3 and P2, and Leu at P1 in the substrate TEXEL motif and, specifically, cleaves after Leu. Cleaves GRA16; proteolytic cleavage is essential for the correct trafficking of GRA16 from the parasite into the infected host nucleus. Cleaves GRA19 and GRA20. Cleaves MYR1. Cleaves LCAT, GRA44, GRA46, GRA46, ROP35/WNG1 and ROP34/WNG2. By regulating the export of dense granule proteins into the host cell, regulates multiple processes during tachyzoite infection of host cells, including recruitment of host mitochondria to the parasitophorous vacuole (PV), formation of the nanotubular network (NTN) or intravacuolar network (IVN) which are membranous tubules that bud from the PV membrane into the vacuolar lumen and, up-regulation of host cell genes to facilitate the parasite infection and modulate the host innate immune response. At the bradyzoite stage, also involved in the formation of the cyst wall. The sequence is that of Aspartic protease 5 from Toxoplasma gondii.